The chain runs to 567 residues: Urease subunit alpha (567 aa).

Residues 129 to 567 (GGIDSHIHFI…LPMAQRYFLF (439 aa)) form the Urease domain. 3 residues coordinate Ni(2+): His134, His136, and Lys217. N6-carboxylysine is present on Lys217. His219 contacts substrate. Ni(2+) is bound by residues His246 and His272. Residue His320 is the Proton donor of the active site. Asp360 serves as a coordination point for Ni(2+).

Belongs to the metallo-dependent hydrolases superfamily. Urease alpha subunit family. Heterotrimer of UreA (gamma), UreB (beta) and UreC (alpha) subunits. Three heterotrimers associate to form the active enzyme. Ni cation is required as a cofactor. Post-translationally, carboxylation allows a single lysine to coordinate two nickel ions.

It is found in the cytoplasm. The catalysed reaction is urea + 2 H2O + H(+) = hydrogencarbonate + 2 NH4(+). The protein operates within nitrogen metabolism; urea degradation; CO(2) and NH(3) from urea (urease route): step 1/1. In Alcanivorax borkumensis (strain ATCC 700651 / DSM 11573 / NCIMB 13689 / SK2), this protein is Urease subunit alpha.